The chain runs to 418 residues: Acyl-[acyl-carrier-protein] desaturase 4, chloroplastic (418 aa).

The N-terminal 70 residues, 1-70 (MASSGLAVAA…ATAAAPADTA (70 aa)), are a transit peptide targeting the chloroplast. Glu152, Glu190, His193, Glu243, Glu276, and His279 together coordinate Fe cation.

This sequence belongs to the fatty acid desaturase type 2 family. As to quaternary structure, homodimer. Requires Fe(2+) as cofactor.

It is found in the plastid. It localises to the chloroplast. The protein operates within lipid metabolism; fatty acid metabolism. Introduces a cis double bond in the acyl chain of an acyl-[acyl-carrier protein]. This Oryza sativa subsp. japonica (Rice) protein is Acyl-[acyl-carrier-protein] desaturase 4, chloroplastic.